The following is a 201-amino-acid chain: UPF0301 protein BP0319 (201 aa).

This sequence belongs to the UPF0301 (AlgH) family.

The polypeptide is UPF0301 protein BP0319 (Bordetella pertussis (strain Tohama I / ATCC BAA-589 / NCTC 13251)).